Reading from the N-terminus, the 702-residue chain is Solute carrier organic anion transporter family member 1B3 (702 aa).

At 1–28 (MDQHQHLNKTAESASSEKKKTRRCNGFK) the chain is on the cytoplasmic side. Residues 29-48 (MFLAALSFSYIAKALGGIIM) traverse the membrane as a helical segment. Residues 49–67 (KISITQIERRFDISSSLAG) are Extracellular-facing. Residues 68–88 (LIDGSFEIGNLLVIVFVSYFG) form a helical membrane-spanning segment. Topologically, residues 89-94 (SKLHRP) are cytoplasmic. The helical transmembrane segment at 95–119 (KLIGIGCLLMGTGSILTSLPHFFMG) threads the bilayer. The Extracellular portion of the chain corresponds to 120-168 (YYRYSKETHINPSENSTSSLSTCLINQTLSFNGTSPEIVEKDCVKESGS). N-linked (GlcNAc...) asparagine glycosylation is found at Asn134, Asn145, and Asn151. Residues 169-197 (HMWIYVFMGNMLRGIGETPIVPLGISYID) form a helical membrane-spanning segment. Topologically, residues 198–216 (DFAKEGHSSLYLGSLNAIG) are cytoplasmic. A helical membrane pass occupies residues 217 to 237 (MIGPVIGFALGSLFAKMYVDI). Residues 238 to 255 (GYVDLSTIRITPKDSRWV) lie on the Extracellular side of the membrane. A helical transmembrane segment spans residues 256–280 (GAWWLGFLVSGLFSIISSIPFFFLP). The Cytoplasmic segment spans residues 281 to 331 (KNPNKPQKERKISLSLHVLKTNDDRNQTANLTNQGKNVTKNVTGFFQSLKS). Phosphoserine occurs at positions 293 and 295. The chain crosses the membrane as a helical span at residues 332–353 (ILTNPLYVIFLLLTLLQVSSFI). Over 354–373 (GSFTYVFKYMEQQYGQSASH) the chain is Extracellular. Residues 374 to 397 (ANFLLGIITIPTVATGMFLGGFII) traverse the membrane as a helical segment. The Cytoplasmic segment spans residues 398–401 (KKFK). A helical membrane pass occupies residues 402-425 (LSLVGIAKFSFLTSMISFLFQLLY). Residues 426 to 537 (FPLICESKSV…NTCTRKFFIY (112 aa)) are Extracellular-facing. Residue Asn445 is glycosylated (N-linked (GlcNAc...) asparagine). One can recognise a Kazal-like domain in the interval 453 to 508 (DVPLSYCNSECNCDESQWEPVCGNNGITYLSPCLAGCKSSSGIKKHTVFYNCSCVE). 3 disulfides stabilise this stretch: Cys459/Cys489, Cys465/Cys485, and Cys474/Cys506. N-linked (GlcNAc...) asparagine glycans are attached at residues Asn503 and Asn516. A helical membrane pass occupies residues 538-560 (VAIQVINSLFSATGGTTFILLTV). Topologically, residues 561–569 (KIVQPELKA) are cytoplasmic. The chain crosses the membrane as a helical span at residues 570–595 (LAMGFQSMVIRTLGGILAPIYFGALI). At 596 to 629 (DKTCMKWSTNSCGAQGACRIYNSVFFGRVYLGLS) the chain is on the extracellular side. A helical membrane pass occupies residues 630–647 (IALRFPALVLYIVFIFAM). The Cytoplasmic segment spans residues 648-695 (KKKFQGKDTKASDNERKVMDEANLEFLNNGEHFVPSAGTDSKTCNLDM). Ser683 is modified (phosphoserine).

Belongs to the organo anion transporter (TC 2.A.60) family. Post-translationally, N-glycosylated. In terms of tissue distribution, highly expressed in liver, in particular at the basolateral membrane of hepatocytes near the central vein. Expressed in the placenta. In testis, primarily localized to the basal membrane of Sertoli cells and weakly expressed in Leydig cells and within the tubules.

The protein resides in the basolateral cell membrane. The protein localises to the basal cell membrane. It catalyses the reaction estrone 3-sulfate(out) + hydrogencarbonate(in) = estrone 3-sulfate(in) + hydrogencarbonate(out). It carries out the reaction 17beta-estradiol 17-O-(beta-D-glucuronate)(out) = 17beta-estradiol 17-O-(beta-D-glucuronate)(in). The enzyme catalyses taurocholate(out) = taurocholate(in). The catalysed reaction is estrone 3-sulfate(out) = estrone 3-sulfate(in). It catalyses the reaction dehydroepiandrosterone 3-sulfate(out) = dehydroepiandrosterone 3-sulfate(in). It carries out the reaction leukotriene C4(out) = leukotriene C4(in). The enzyme catalyses L-thyroxine(out) = L-thyroxine(in). The catalysed reaction is prostaglandin E2(out) = prostaglandin E2(in). It catalyses the reaction (4E,15E)-bilirubin IXalpha C8-beta-D-glucuronoside(out) = (4E,15E)-bilirubin IXalpha C8-beta-D-glucuronoside(in). It carries out the reaction bilirubin IXalpha bis-beta-D-glucuronoside(out) = bilirubin IXalpha bis-beta-D-glucuronoside(in). In terms of biological role, mediates the Na(+)-independent uptake of organic anions. Shows broad substrate specificity, can transport both organic anions such as bile acid taurocholate (cholyltaurine) and conjugated steroids (17-beta-glucuronosyl estradiol, dehydroepiandrosterone sulfate (DHEAS), and estrone 3-sulfate), as well as eicosanoid leukotriene C4, prostaglandin E2 and L-thyroxine (T4). Hydrogencarbonate/HCO3(-) acts as the probable counteranion that exchanges for organic anions. Shows a pH-sensitive substrate specificity towards sulfated steroids, taurocholate and T4 which may be ascribed to the protonation state of the binding site and leads to a stimulation of substrate transport in an acidic microenvironment. Involved in the clearance of bile acids and organic anions from the liver. Can take up bilirubin glucuronides from plasma into the liver, contributing to the detoxification-enhancing liver-blood shuttling loop. Transports coproporphyrin I and III, by-products of heme synthesis, and may be involved in their hepatic disposition. May contribute to regulate the transport of organic compounds in testes across the blood-testis-barrier. Can transport HMG-CoA reductase inhibitors (also known as statins) such as pitavastatin, a clinically important class of hypolipidemic drugs. May play an important role in plasma and tissue distribution of the structurally diverse chemotherapeutic drugs methotrexate and paclitaxel. May also transport antihypertension agents, such as the angiotensin-converting enzyme (ACE) inhibitor prodrug enalapril, and the highly selective angiotensin II AT1-receptor antagonist valsartan, in the liver. The chain is Solute carrier organic anion transporter family member 1B3 (SLCO1B3) from Homo sapiens (Human).